Reading from the N-terminus, the 86-residue chain is Precursor of CEP4 (86 aa).

An N-terminal signal peptide occupies residues 1–30 (MVSRGCSITVLFRFLIVLLVIQVHFENTKA). Residues 31-64 (ARHAPVVSWSPPEPPKDDFVWYHKINRFKNIEQD) constitute a propeptide that is removed on maturation. The disordered stretch occupies residues 63-86 (QDAFRPTHQGPSQGIGHKNPPGAP). Residues proline 68 and proline 73 each carry the hydroxyproline modification. A propeptide spanning residues 80–86 (KNPPGAP) is cleaved from the precursor.

The protein belongs to the C-terminally encoded plant signaling peptide (CEP) family. As to quaternary structure, interacts with CEP receptors (e.g. CEPR1 and CEPR2). In terms of processing, the mature small signaling peptide is generated by proteolytic processing of the longer precursor. Expressed at low levels in flowers. Present in lateral roots, shoot apical meristem (SAM), flowers and siliques.

Its subcellular location is the secreted. It localises to the extracellular space. The protein resides in the apoplast. In terms of biological role, extracellular signaling peptide that represses primary root growth rate. Promotes shoot growth and modulates leaf morphology. Regulates systemic nitrogen (N)-demand signaling. Mediates up-regulation of genes involved in N uptake and assimilation pathways. The chain is Precursor of CEP4 from Arabidopsis thaliana (Mouse-ear cress).